Reading from the N-terminus, the 637-residue chain is DNA mismatch repair protein MutL (637 aa).

2 disordered regions span residues 352–384 and 405–430; these read DDFTSAKPSEDRGSTSSNEENEQRSSIDKNVLF and ASVEPALEKEPPAAELTAGAKGAMEQ.

It belongs to the DNA mismatch repair MutL/HexB family.

Its function is as follows. This protein is involved in the repair of mismatches in DNA. It is required for dam-dependent methyl-directed DNA mismatch repair. May act as a 'molecular matchmaker', a protein that promotes the formation of a stable complex between two or more DNA-binding proteins in an ATP-dependent manner without itself being part of a final effector complex. The chain is DNA mismatch repair protein MutL from Halalkalibacterium halodurans (strain ATCC BAA-125 / DSM 18197 / FERM 7344 / JCM 9153 / C-125) (Bacillus halodurans).